A 249-amino-acid polypeptide reads, in one-letter code: BPI fold-containing family A member 2 (249 aa).

Residues 1–18 (MLQLWKLVLLCGVLTGTS) form the signal peptide. 2 N-linked (GlcNAc...) asparagine glycosylation sites follow: Asn124 and Asn132. A disulfide bridge connects residues Cys174 and Cys217.

This sequence belongs to the BPI/LBP/Plunc superfamily. Plunc family. As to expression, detected in submandibular gland. Secreted into saliva.

The protein resides in the secreted. Has strong antibacterial activity against P.aeruginosa. This is BPI fold-containing family A member 2 (BPIFA2) from Homo sapiens (Human).